The chain runs to 475 residues: MKKTTLAMSALALSLGLALSPLSATAAETSSSAMTAQQMPSLAPMLEKVMPSVVSINVEGSTTVNTPRMPRNFQQFFGDDSPFCQDGSPFQNSPFCQGGGNGGNGGQQQKFMALGSGVIIDAAKGYVVTNNHVVDNASVIKVQLSDGRKFDAKVVGKDPRSDIALIQIQNPKNLTAIKLADSDALRVGDYTVAIGNPFGLGETVTSGIVSALGRSGLNVENYENFIQTDAAINRGNSGGALVNLNGELIGINTAILAPDGGNIGIGFAIPSNMVKNLTSQMVEYGQVKRGELGIMGTELNSELAKAMKVDAQRGAFVSQVMPNSSAAKAGIKAGDVITSLNGKPISSFAALRAQVGTMPVGSKISLGLLREGKAITVNLELQQSSQSQVDSSTIFSGIEGAEMSNKGQDKGVVVSSVKANSPAAQIGLKKGDVIIGANQQPVKNIAELRKILDSKPSVLALNIQRGDSSIYLLMQ.

Residues 1-26 (MKKTTLAMSALALSLGLALSPLSATA) form the signal peptide. Residue glutamate 59 participates in substrate binding. The cysteines at positions 84 and 96 are disulfide-linked. Residues histidine 132, aspartate 162, 235 to 237 (GNS), 253 to 257 (TAILA), and 292 to 296 (LGIMG) each bind substrate. Active-site charge relay system residues include histidine 132, aspartate 162, and serine 237. PDZ domains are found at residues 281-372 (MVEY…LREG) and 378-467 (NLEL…QRGD).

The protein belongs to the peptidase S1C family. DegP can reversibly switch between different oligomeric forms that represent inactive (6-mer) and active (12- and 24-mer) protease states. Substrate binding triggers the conversion of the resting DegP trimer and hexamer into catalytically active 12- and 24-mers. The conversion of 6-mer (DegP6) into 12-mer (DegP12) or 24-mer (DegP24) is crucial in regulating protease activity.

It is found in the cell inner membrane. It catalyses the reaction Acts on substrates that are at least partially unfolded. The cleavage site P1 residue is normally between a pair of hydrophobic residues, such as Val-|-Val.. In terms of biological role, degP acts as a chaperone at low temperatures but switches to a peptidase (heat shock protein) at higher temperatures. It degrades transiently denatured and unfolded proteins which accumulate in the periplasm following heat shock or other stress conditions. DegP is efficient with Val-Xaa and Ile-Xaa peptide bonds, suggesting a preference for beta-branched side chain amino acids. Only unfolded proteins devoid of disulfide bonds appear capable of being cleaved, thereby preventing non-specific proteolysis of folded proteins. Its proteolytic activity is essential for the survival of cells at elevated temperatures. It can degrade IciA, ada, casein, globin and PapA. DegP shares specificity with DegQ. DegP is also involved in the biogenesis of partially folded outer-membrane proteins (OMP). In Salmonella typhimurium (strain LT2 / SGSC1412 / ATCC 700720), this protein is Periplasmic serine endoprotease DegP (degP).